A 294-amino-acid chain; its full sequence is S-adenosylmethionine uptake transporter (294 aa).

The next 10 membrane-spanning stretches (helical) occupy residues 4–24 (ALKT…TSSI), 41–61 (VAFF…VYYG), 74–91 (VLRG…TYGL), 98–118 (TATV…VFIL), 121–141 (NIIW…VVML), 148–168 (FNPE…LDII), 178–198 (MLSM…PVAM), 207–227 (FELA…FFLL), 237–257 (ATAP…YFIF), and 260–280 (FPDK…LFII). EamA domains lie at 22-141 (SSIN…VVML) and 160-280 (ISFA…LFII).

Belongs to the drug/metabolite transporter (DMT) superfamily. 10 TMS drug/metabolite exporter (DME) (TC 2.A.7.3) family.

It is found in the cell inner membrane. Transport is inhibited by S-adenosylethionine and to a lesser extent by S-adenosylhomocysteine. Unlike eukaryotic transporters is not inhibited by sinfungin. Also inhibited by 2.4-dinitrophenol, suggesting transport is an energy-dependent process. In terms of biological role, transports S-adenosylmethionine. The chain is S-adenosylmethionine uptake transporter (sam) from Rickettsia prowazekii (strain Madrid E).